We begin with the raw amino-acid sequence, 496 residues long: Gamma-aminobutyric acid receptor subunit beta-like (496 aa).

The or 27 signal peptide spans 1–20; sequence MTCFTRVGVSCGLFFFLLGA. Topologically, residues 21 to 258 are extracellular; that stretch reads QLQLIRCIRK…SFKLQRNIGY (238 aa). Asn39 and Asn189 each carry an N-linked (GlcNAc...) asparagine glycan. Cys176 and Cys190 form a disulfide bridge. A run of 3 helical transmembrane segments spans residues 259–280, 285–306, and 318–342; these read FVFQTYLPSILIVMLSWVSFWI, TSARVALGITTVLTMTTISTGV, and AIDIYLVMCFVFVFAALLEYAAVNY. Over 343–472 the chain is Cytoplasmic; sequence TYWGKRAKKK…KIKDVNIIDK (130 aa). A helical membrane pass occupies residues 473–494; it reads YSRMIFPISFLAFNLGYWLFYI.

This sequence belongs to the ligand-gated ion channel (TC 1.A.9) family. Gamma-aminobutyric acid receptor (TC 1.A.9.5) subfamily. As to quaternary structure, generally pentameric. There are five types of GABA(A) receptor chains: alpha, beta, gamma, delta, and rho. Interacts with Grd (alpha chain).

Its subcellular location is the postsynaptic cell membrane. The protein localises to the cell membrane. GABA, an inhibitory neurotransmitter, mediates neuronal inhibition by binding to the GABA receptor and opening an integral chloride channel. Combines with the ligand-gated ion channel subunit GRD to form cation-selective GABA-gated ion channels when coexpressed in Xenopus laevis oocytes. The protein is Gamma-aminobutyric acid receptor subunit beta-like (Lcch3) of Drosophila melanogaster (Fruit fly).